The primary structure comprises 146 residues: uncharacterized protein (146 aa).

2 consecutive transmembrane segments (helical) span residues 89-111 (AIEMVGKVLILVPLLASLVLLLY) and 121-143 (IGCGFCLGTVILAGIVLVGYSVV).

The protein resides in the cell membrane. This is an uncharacterized protein from Archaeoglobus fulgidus (strain ATCC 49558 / DSM 4304 / JCM 9628 / NBRC 100126 / VC-16).